Here is a 551-residue protein sequence, read N- to C-terminus: Probable NADH-ubiquinone oxidoreductase C3A11.07, mitochondrial (551 aa).

A mitochondrion-targeting transit peptide spans 1–37; it reads MLFSRSILRGMPKAGIPKSPLALSASRNLRLANSVRF. Position 93-123 (93-123) interacts with FAD; the sequence is TLVVLGAGWGATSILRTIDTSLFNVIVVSPR. 255-291 is an NAD(+) binding site; it reads VHTVVVGGGPTGMEFAGEMADFIEDDLKSWYPELADD.

Belongs to the NADH dehydrogenase family.

The protein resides in the mitochondrion. It catalyses the reaction a quinone + NADH + H(+) = a quinol + NAD(+). The enzyme catalyses a ubiquinone + NADH + H(+) = a ubiquinol + NAD(+). Catalyzes the oxidation of NADH. The sequence is that of Probable NADH-ubiquinone oxidoreductase C3A11.07, mitochondrial from Schizosaccharomyces pombe (strain 972 / ATCC 24843) (Fission yeast).